The following is a 404-amino-acid chain: MQLDNVTNAGIHSFQGHRGVANKPNVILQIGKCRAEMLEHVRRTHRHLLSEVSKQVERELKGLQKSVGKLENNLEDHVPTDNQRWKKSIKACLARCQETIAHLERWVKREMNVWKEVFFRLEKWADRLESMGGKYCPGEHGKQTVSVGVGGPEIRPSEGEIYDYALDMSQMYALTPAPGEVPSIPQAHDSYQWVSVSEDAPASPVETQIFEDPHEFLSHLEEYLKQVGGTEEYWLSQIQNHMNGPAKKWWEYKQDSVKNWVEFKKEFLQYSEGTLTRDAIKRELDLPQKEGEPLDQFLWRKRDLYQTLYVDADEEEIIQYVVGTLQPKLKRFLSYPLPKTLEQLIQRGKEVQGNMDHSEEPSPQRTPEIQSGDSVESMPPSTTASPVPSNGTQPEPPSPPATVI.

A coiled-coil region spans residues 51-78 (EVSKQVERELKGLQKSVGKLENNLEDHV). The disordered stretch occupies residues 351–404 (VQGNMDHSEEPSPQRTPEIQSGDSVESMPPSTTASPVPSNGTQPEPPSPPATVI). Residues 363 to 393 (PQRTPEIQSGDSVESMPPSTTASPVPSNGTQ) show a composition bias toward polar residues. Over residues 394 to 404 (PEPPSPPATVI) the composition is skewed to pro residues.

It belongs to the ARC/ARG3.1 family. Homooligomer; homooligomerizes into virion-like capsids. Post-translationally, palmitoylation anchors the protein into the membrane by allowing direct insertion into the hydrophobic core of the lipid bilayer. Expressed at various levels throughout the brain.

Its subcellular location is the extracellular vesicle membrane. It localises to the postsynaptic cell membrane. It is found in the synapse. The protein localises to the postsynaptic density. The protein resides in the early endosome membrane. Its subcellular location is the cell projection. It localises to the dendrite. It is found in the cytoplasm. The protein localises to the cytoskeleton. The protein resides in the cell cortex. Its subcellular location is the dendritic spine. Its function is as follows. Master regulator of synaptic plasticity that self-assembles into virion-like capsids that encapsulate RNAs and mediate intercellular RNA transfer in the nervous system. ARC protein is released from neurons in extracellular vesicles that mediate the transfer of ARC mRNA into new target cells, where ARC mRNA can undergo activity-dependent translation. ARC capsids are endocytosed and are able to transfer ARC mRNA into the cytoplasm of neurons. Acts as a key regulator of synaptic plasticity: required for protein synthesis-dependent forms of long-term potentiation (LTP) and depression (LTD) and for the formation of long-term memory. Regulates synaptic plasticity by promoting endocytosis of AMPA receptors (AMPARs) in response to synaptic activity: this endocytic pathway maintains levels of surface AMPARs in response to chronic changes in neuronal activity through synaptic scaling, thereby contributing to neuronal homeostasis. Acts as a postsynaptic mediator of activity-dependent synapse elimination in the developing cerebellum by mediating elimination of surplus climbing fiber synapses. Accumulates at weaker synapses, probably to prevent their undesired enhancement. This suggests that ARC-containing virion-like capsids may be required to eliminate synaptic material. In Gallus gallus (Chicken), this protein is Activity-regulated cytoskeleton-associated protein.